The chain runs to 131 residues: Putative pre-16S rRNA nuclease (131 aa).

This sequence belongs to the YqgF nuclease family.

The protein localises to the cytoplasm. In terms of biological role, could be a nuclease involved in processing of the 5'-end of pre-16S rRNA. The protein is Putative pre-16S rRNA nuclease of Bordetella petrii (strain ATCC BAA-461 / DSM 12804 / CCUG 43448).